The following is a 461-amino-acid chain: ATP synthase subunit beta (461 aa).

ATP is bound at residue 151–158 (GGAGVGKT).

It belongs to the ATPase alpha/beta chains family. F-type ATPases have 2 components, CF(1) - the catalytic core - and CF(0) - the membrane proton channel. CF(1) has five subunits: alpha(3), beta(3), gamma(1), delta(1), epsilon(1). CF(0) has three main subunits: a(1), b(2) and c(9-12). The alpha and beta chains form an alternating ring which encloses part of the gamma chain. CF(1) is attached to CF(0) by a central stalk formed by the gamma and epsilon chains, while a peripheral stalk is formed by the delta and b chains.

The protein resides in the cell inner membrane. The enzyme catalyses ATP + H2O + 4 H(+)(in) = ADP + phosphate + 5 H(+)(out). Functionally, produces ATP from ADP in the presence of a proton gradient across the membrane. The catalytic sites are hosted primarily by the beta subunits. This is ATP synthase subunit beta from Coxiella burnetii (strain Dugway 5J108-111).